We begin with the raw amino-acid sequence, 241 residues long: 3-deoxy-manno-octulosonate cytidylyltransferase (241 aa).

It belongs to the KdsB family.

The protein localises to the cytoplasm. It carries out the reaction 3-deoxy-alpha-D-manno-oct-2-ulosonate + CTP = CMP-3-deoxy-beta-D-manno-octulosonate + diphosphate. Its pathway is nucleotide-sugar biosynthesis; CMP-3-deoxy-D-manno-octulosonate biosynthesis; CMP-3-deoxy-D-manno-octulosonate from 3-deoxy-D-manno-octulosonate and CTP: step 1/1. The protein operates within bacterial outer membrane biogenesis; lipopolysaccharide biosynthesis. Activates KDO (a required 8-carbon sugar) for incorporation into bacterial lipopolysaccharide in Gram-negative bacteria. The sequence is that of 3-deoxy-manno-octulosonate cytidylyltransferase from Rickettsia rickettsii (strain Sheila Smith).